The following is a 63-amino-acid chain: Large ribosomal subunit protein bL32 (63 aa).

The protein belongs to the bacterial ribosomal protein bL32 family.

This is Large ribosomal subunit protein bL32 from Lacticaseibacillus paracasei (strain ATCC 334 / BCRC 17002 / CCUG 31169 / CIP 107868 / KCTC 3260 / NRRL B-441) (Lactobacillus paracasei).